The primary structure comprises 406 residues: Cysteine desulfurase (406 aa).

The residue at position 226 (Lys226) is an N6-(pyridoxal phosphate)lysine. Cys364 serves as the catalytic Cysteine persulfide intermediate.

It belongs to the class-V pyridoxal-phosphate-dependent aminotransferase family. Csd subfamily. As to quaternary structure, homodimer. Interacts with SufE and the SufBCD complex composed of SufB, SufC and SufD. The interaction with SufE is required to mediate the direct transfer of the sulfur atom from the S-sulfanylcysteine. The cofactor is pyridoxal 5'-phosphate.

The protein resides in the cytoplasm. It catalyses the reaction (sulfur carrier)-H + L-cysteine = (sulfur carrier)-SH + L-alanine. The catalysed reaction is L-selenocysteine + AH2 = hydrogenselenide + L-alanine + A + H(+). Its pathway is cofactor biosynthesis; iron-sulfur cluster biosynthesis. In terms of biological role, cysteine desulfurases mobilize the sulfur from L-cysteine to yield L-alanine, an essential step in sulfur metabolism for biosynthesis of a variety of sulfur-containing biomolecules. Component of the suf operon, which is activated and required under specific conditions such as oxidative stress and iron limitation. Acts as a potent selenocysteine lyase in vitro, that mobilizes selenium from L-selenocysteine. Selenocysteine lyase activity is however unsure in vivo. This Escherichia fergusonii (strain ATCC 35469 / DSM 13698 / CCUG 18766 / IAM 14443 / JCM 21226 / LMG 7866 / NBRC 102419 / NCTC 12128 / CDC 0568-73) protein is Cysteine desulfurase.